The following is a 290-amino-acid chain: 4-diphosphocytidyl-2-C-methyl-D-erythritol kinase (290 aa).

Lys-10 is a catalytic residue. Residue 95–105 (PVAAGLAGGSS) participates in ATP binding. Asp-137 is a catalytic residue.

The protein belongs to the GHMP kinase family. IspE subfamily.

It catalyses the reaction 4-CDP-2-C-methyl-D-erythritol + ATP = 4-CDP-2-C-methyl-D-erythritol 2-phosphate + ADP + H(+). It participates in isoprenoid biosynthesis; isopentenyl diphosphate biosynthesis via DXP pathway; isopentenyl diphosphate from 1-deoxy-D-xylulose 5-phosphate: step 3/6. Functionally, catalyzes the phosphorylation of the position 2 hydroxy group of 4-diphosphocytidyl-2C-methyl-D-erythritol. In Geobacillus thermodenitrificans (strain NG80-2), this protein is 4-diphosphocytidyl-2-C-methyl-D-erythritol kinase.